A 238-amino-acid polypeptide reads, in one-letter code: Ribosomal RNA small subunit methyltransferase G (238 aa).

S-adenosyl-L-methionine contacts are provided by residues G77, F82, 128–129 (AE), and R147. Residues 219 to 238 (KKTPARYPRKPGTPNKQPIQ) are disordered.

The protein belongs to the methyltransferase superfamily. RNA methyltransferase RsmG family.

It is found in the cytoplasm. Specifically methylates the N7 position of guanine in position 535 of 16S rRNA. This chain is Ribosomal RNA small subunit methyltransferase G, found in Geobacillus thermodenitrificans (strain NG80-2).